Here is an 81-residue protein sequence, read N- to C-terminus: Photosystem I iron-sulfur center (81 aa).

2 4Fe-4S ferredoxin-type domains span residues 2 to 31 (SHTV…MVPW) and 39 to 68 (IASA…VRVY). Positions 11, 14, 17, 21, 48, 51, 54, and 58 each coordinate [4Fe-4S] cluster.

In terms of assembly, the eukaryotic PSI reaction center is composed of at least 11 subunits. [4Fe-4S] cluster is required as a cofactor.

It is found in the plastid. The protein localises to the chloroplast thylakoid membrane. It carries out the reaction reduced [plastocyanin] + hnu + oxidized [2Fe-2S]-[ferredoxin] = oxidized [plastocyanin] + reduced [2Fe-2S]-[ferredoxin]. Apoprotein for the two 4Fe-4S centers FA and FB of photosystem I (PSI); essential for photochemical activity. FB is the terminal electron acceptor of PSI, donating electrons to ferredoxin. The C-terminus interacts with PsaA/B/D and helps assemble the protein into the PSI complex. Required for binding of PsaD and PsaE to PSI. PSI is a plastocyanin/cytochrome c6-ferredoxin oxidoreductase, converting photonic excitation into a charge separation, which transfers an electron from the donor P700 chlorophyll pair to the spectroscopically characterized acceptors A0, A1, FX, FA and FB in turn. The protein is Photosystem I iron-sulfur center of Chlorella vulgaris (Green alga).